A 613-amino-acid chain; its full sequence is Penicillin-binding protein activator LpoA (613 aa).

The first 29 residues, M1–G29, serve as a signal peptide directing secretion. C30 is lipidated: N-palmitoyl cysteine. Residue C30 is the site of S-diacylglycerol cysteine attachment.

Belongs to the LpoA family. As to quaternary structure, interacts with PBP1a.

The protein resides in the cell outer membrane. Its function is as follows. Regulator of peptidoglycan synthesis that is essential for the function of penicillin-binding protein 1A (PBP1a). The polypeptide is Penicillin-binding protein activator LpoA (Photobacterium profundum (strain SS9)).